A 145-amino-acid chain; its full sequence is Sporulation-specific cell division protein Francci3_3418 (145 aa).

It belongs to the SsgA family.

It localises to the cell septum. In terms of biological role, involved in sporulation-specific cell division. The sequence is that of Sporulation-specific cell division protein Francci3_3418 from Frankia casuarinae (strain DSM 45818 / CECT 9043 / HFP020203 / CcI3).